An 863-amino-acid chain; its full sequence is Leucine--tRNA ligase (863 aa).

Residues 42–52 (PYPSGKIHMGH) carry the 'HIGH' region motif. The short motif at 618-622 (KMSKS) is the 'KMSKS' region element. Lys-621 is a binding site for ATP.

This sequence belongs to the class-I aminoacyl-tRNA synthetase family.

The protein resides in the cytoplasm. It carries out the reaction tRNA(Leu) + L-leucine + ATP = L-leucyl-tRNA(Leu) + AMP + diphosphate. This chain is Leucine--tRNA ligase, found in Desulforapulum autotrophicum (strain ATCC 43914 / DSM 3382 / VKM B-1955 / HRM2) (Desulfobacterium autotrophicum).